The sequence spans 141 residues: Nucleoside diphosphate kinase (141 aa).

6 residues coordinate ATP: Lys9, Phe57, Arg85, Thr91, Arg102, and Asn112. The active-site Pros-phosphohistidine intermediate is the His115.

The protein belongs to the NDK family. As to quaternary structure, homotetramer. The cofactor is Mg(2+).

The protein resides in the cytoplasm. The enzyme catalyses a 2'-deoxyribonucleoside 5'-diphosphate + ATP = a 2'-deoxyribonucleoside 5'-triphosphate + ADP. The catalysed reaction is a ribonucleoside 5'-diphosphate + ATP = a ribonucleoside 5'-triphosphate + ADP. In terms of biological role, major role in the synthesis of nucleoside triphosphates other than ATP. The ATP gamma phosphate is transferred to the NDP beta phosphate via a ping-pong mechanism, using a phosphorylated active-site intermediate. The sequence is that of Nucleoside diphosphate kinase from Chlamydia abortus (strain DSM 27085 / S26/3) (Chlamydophila abortus).